The following is a 1263-amino-acid chain: DNA topoisomerase 2 (1263 aa).

ATP-binding positions include Asn-80, Asn-109, 137-139, and 150-157; these read STN and GKNGFGAK. The tract at residues 329–331 is interaction with DNA; the sequence is VKK. 362-364 contributes to the ATP binding site; that stretch reads QTK. Residues 439-553 form the Toprim domain; sequence CTLILTEGDS…SLVKYEGFIQ (115 aa). Residues Glu-445, Asp-522, and Asp-524 each contribute to the Mg(2+) site. The Topo IIA-type catalytic domain occupies 737-1223; that stretch reads VPNLMDGFKP…SPEEIWEEEL (487 aa). The active-site O-(5'-phospho-DNA)-tyrosine intermediate is the Tyr-828. The segment at 977–1015 is disordered; it reads KKASKAVSSAKNTKTTTKAGSKTGSRTRKNPALAKKSQK. Residues 981 to 1000 show a composition bias toward low complexity; the sequence is KAVSSAKNTKTTTKAGSKTG. The interaction with DNA stretch occupies residues 1068–1077; sequence KLVKPLNLTN. The tract at residues 1244 to 1263 is disordered; sequence LLNKKKGSTGKKSRKTSTQK. Residues 1247 to 1263 show a composition bias toward basic residues; the sequence is KKKGSTGKKSRKTSTQK.

It belongs to the type II topoisomerase family. Requires Mg(2+) as cofactor. It depends on Mn(2+) as a cofactor. Ca(2+) serves as cofactor.

The enzyme catalyses ATP-dependent breakage, passage and rejoining of double-stranded DNA.. Functionally, can introduce negative superhelical turns into double-stranded circular DNA. The protein is DNA topoisomerase 2 (TOP2) of Acanthamoeba polyphaga (Amoeba).